Reading from the N-terminus, the 393-residue chain is Putative F-box/kelch-repeat protein At1g32430 (393 aa).

One can recognise an F-box domain in the interval 1-47 (MANKEKLPWDLEEEILSRVPPTSLDRFKTVCKRWNALFNDKTFINNH). 2 Kelch repeats span residues 151-199 (YMKD…NLSV) and 308-357 (WIYV…QVQF).

This is Putative F-box/kelch-repeat protein At1g32430 from Arabidopsis thaliana (Mouse-ear cress).